The following is a 155-amino-acid chain: Probable jacalin-related lectin 26 (155 aa).

Transmembrane regions (helical) follow at residues 26–48 (AYLY…IAMI) and 127–149 (VSFV…VLFL). Residues 47 to 155 (MIRAGSVGKK…VLFLMKFKRS (109 aa)) enclose the Jacalin-type lectin domain.

It belongs to the jacalin lectin family.

Its subcellular location is the membrane. The polypeptide is Probable jacalin-related lectin 26 (JAL26) (Arabidopsis thaliana (Mouse-ear cress)).